We begin with the raw amino-acid sequence, 239 residues long: Ribosomal RNA small subunit methyltransferase G (239 aa).

S-adenosyl-L-methionine contacts are provided by residues Gly-78, Phe-83, 129-130 (AE), and Arg-148.

The protein belongs to the methyltransferase superfamily. RNA methyltransferase RsmG family.

The protein resides in the cytoplasm. Functionally, specifically methylates the N7 position of a guanine in 16S rRNA. This chain is Ribosomal RNA small subunit methyltransferase G, found in Clostridium botulinum (strain Eklund 17B / Type B).